Reading from the N-terminus, the 209-residue chain is Transmembrane emp24 domain-containing protein B (209 aa).

The first 24 residues, 1–24, serve as a signal peptide directing secretion; it reads MNKTNQLINICILVTLFLIGSSSA. Residues 25–174 are Lumenal-facing; sequence LTLQVEPKSQ…RDTSESTNAR (150 aa). The region spanning 34-119 is the GOLD domain; sequence QECFYNFIES…AKVVTFTWAS (86 aa). A helical transmembrane segment spans residues 175–195; it reads VVWWTIAEVIVLVVMGVGQIW. Residues 196 to 209 lie on the Cytoplasmic side of the membrane; that stretch reads YLRKWFDNKSTGRV.

The protein belongs to the EMP24/GP25L family.

Its subcellular location is the cytoplasmic vesicle membrane. Its function is as follows. Could have a role in the budding of coatomer-coated and other species of coated vesicles. This Dictyostelium discoideum (Social amoeba) protein is Transmembrane emp24 domain-containing protein B (empB).